Consider the following 591-residue polypeptide: Aspartate--tRNA ligase (591 aa).

An L-aspartate-binding site is contributed by glutamate 172. The aspartate stretch occupies residues 196-199 (QLFK). Residue arginine 218 participates in L-aspartate binding. Residues 218 to 220 (RDE) and glutamine 227 each bind ATP. Position 449 (histidine 449) interacts with L-aspartate. Residue glutamate 483 coordinates ATP. Arginine 490 contributes to the L-aspartate binding site. ATP is bound at residue 535–538 (GLDR).

It belongs to the class-II aminoacyl-tRNA synthetase family. Type 1 subfamily. Homodimer.

It is found in the cytoplasm. The catalysed reaction is tRNA(Asp) + L-aspartate + ATP = L-aspartyl-tRNA(Asp) + AMP + diphosphate. Its function is as follows. Catalyzes the attachment of L-aspartate to tRNA(Asp) in a two-step reaction: L-aspartate is first activated by ATP to form Asp-AMP and then transferred to the acceptor end of tRNA(Asp). The polypeptide is Aspartate--tRNA ligase (Actinobacillus pleuropneumoniae serotype 5b (strain L20)).